The chain runs to 366 residues: Anhydro-N-acetylmuramic acid kinase (366 aa).

10 to 17 (GTSMDGID) is a binding site for ATP.

It belongs to the anhydro-N-acetylmuramic acid kinase family.

The enzyme catalyses 1,6-anhydro-N-acetyl-beta-muramate + ATP + H2O = N-acetyl-D-muramate 6-phosphate + ADP + H(+). It participates in amino-sugar metabolism; 1,6-anhydro-N-acetylmuramate degradation. It functions in the pathway cell wall biogenesis; peptidoglycan recycling. Functionally, catalyzes the specific phosphorylation of 1,6-anhydro-N-acetylmuramic acid (anhMurNAc) with the simultaneous cleavage of the 1,6-anhydro ring, generating MurNAc-6-P. Is required for the utilization of anhMurNAc either imported from the medium or derived from its own cell wall murein, and thus plays a role in cell wall recycling. The chain is Anhydro-N-acetylmuramic acid kinase from Legionella pneumophila (strain Lens).